The sequence spans 186 residues: NADH-quinone oxidoreductase subunit B (186 aa).

Residues C44, C45, C110, and C139 each contribute to the [4Fe-4S] cluster site.

This sequence belongs to the complex I 20 kDa subunit family. As to quaternary structure, NDH-1 is composed of 14 different subunits. Subunits NuoB, C, D, E, F, and G constitute the peripheral sector of the complex. It depends on [4Fe-4S] cluster as a cofactor.

The protein localises to the cell inner membrane. The catalysed reaction is a quinone + NADH + 5 H(+)(in) = a quinol + NAD(+) + 4 H(+)(out). In terms of biological role, NDH-1 shuttles electrons from NADH, via FMN and iron-sulfur (Fe-S) centers, to quinones in the respiratory chain. The immediate electron acceptor for the enzyme in this species is believed to be ubiquinone. Couples the redox reaction to proton translocation (for every two electrons transferred, four hydrogen ions are translocated across the cytoplasmic membrane), and thus conserves the redox energy in a proton gradient. The chain is NADH-quinone oxidoreductase subunit B from Leptospira interrogans serogroup Icterohaemorrhagiae serovar copenhageni (strain Fiocruz L1-130).